Consider the following 292-residue polypeptide: Ribonuclease HIII (292 aa).

One can recognise an RNase H type-2 domain in the interval 76 to 292; that stretch reads TNLIGTDEVG…TQKAIKIAQL (217 aa). Residues aspartate 82, glutamate 83, and aspartate 186 each contribute to the a divalent metal cation site.

It belongs to the RNase HII family. RnhC subfamily. The cofactor is Mn(2+). Requires Mg(2+) as cofactor.

Its subcellular location is the cytoplasm. The enzyme catalyses Endonucleolytic cleavage to 5'-phosphomonoester.. Endonuclease that specifically degrades the RNA of RNA-DNA hybrids. The polypeptide is Ribonuclease HIII (Lactococcus lactis subsp. lactis (strain IL1403) (Streptococcus lactis)).